The primary structure comprises 216 residues: MTDAPQHPQQPATGTPATPKAAPRVGRDVRIGATCGLLVALMVGAAYAAVPFYNWFCRATGFNGTTQVAKVAPSAAPLARTVAVRFDSNISGGLPWKFEPEQTEINVRIGEVATVYYTVTNHAATATTGQAAYNVTPLTVGSYFTKINCFCFTEQTLAPGEKREMAVVFYVDPSFAADSENDGVRTITLSYTFFPVKDAAPKPVAASEPDRPGGSI.

Over residues 1 to 23 (MTDAPQHPQQPATGTPATPKAAP) the composition is skewed to low complexity. A disordered region spans residues 1-24 (MTDAPQHPQQPATGTPATPKAAPR). The Cytoplasmic portion of the chain corresponds to 1-26 (MTDAPQHPQQPATGTPATPKAAPRVG). The chain crosses the membrane as a helical; Signal-anchor for type II membrane protein span at residues 27-49 (RDVRIGATCGLLVALMVGAAYAA). The Periplasmic portion of the chain corresponds to 50 to 216 (VPFYNWFCRA…SEPDRPGGSI (167 aa)).

This sequence belongs to the COX11/CtaG family.

The protein localises to the cell inner membrane. Its function is as follows. Exerts its effect at some terminal stage of cytochrome c oxidase synthesis, probably by being involved in the insertion of the copper B into subunit I. This Nitrobacter hamburgensis (strain DSM 10229 / NCIMB 13809 / X14) protein is Cytochrome c oxidase assembly protein CtaG.